Here is a 447-residue protein sequence, read N- to C-terminus: Ameloblastin (447 aa).

Residues 1–26 form the signal peptide; sequence MSASKIPLFKMKDLILILCLLEMSFA. P37 bears the Hydroxyproline mark. S43 carries the post-translational modification Phosphoserine. S112 carries O-linked (GalNAc...) serine glycosylation. 3 disordered regions span residues 165 to 211, 307 to 338, and 353 to 383; these read QQVA…DFAD, DSPVAATKGPENEEGGAQGSPMPEANPDNLEN, and LLALPKDDIPGLPRSPSGKMKGLPSVTPAAA. Tandem repeats lie at residues 189–201 and 202–214.

It belongs to the ameloblastin family. In terms of tissue distribution, ameloblast-specific. Located at the Tomes processes of secretory ameloblasts and in the sheath space between rod-interrod enamel.

Its subcellular location is the secreted. It localises to the extracellular space. The protein resides in the extracellular matrix. Its function is as follows. Involved in the mineralization and structural organization of enamel. The chain is Ameloblastin (AMBN) from Homo sapiens (Human).